The chain runs to 562 residues: Serine/threonine-protein kinase dst3 (562 aa).

A Protein kinase domain is found at 23-285; that stretch reads FQIVEVVGSG…AQQLLSHPFI (263 aa). ATP-binding positions include 29–37 and K59; that span reads VGSGSFGTV. The Proton acceptor role is filled by D154. 2 disordered regions span residues 316-339 and 366-562; these read LEEQEQQRNSSGSKMVSSVPTRAS and SIMR…NVNI. The span at 322 to 339 shows a compositional bias: polar residues; it reads QRNSSGSKMVSSVPTRAS. Composition is skewed to low complexity over residues 421–431, 442–454, and 476–494; these read NNNNNNNNTTT, QQQQQQQQQNNNK, and TTPTTPTTTQPNTSTTTKT. Residues 495–522 are compositionally biased toward polar residues; the sequence is GSSLNIKPTNNVNRSTISIGQQKSPLQS. Acidic residues predominate over residues 542-562; sequence EDEEDEEEFNHEDYEEINVNI.

It belongs to the protein kinase superfamily. STE Ser/Thr protein kinase family. STE20 subfamily. It depends on Mg(2+) as a cofactor.

It catalyses the reaction L-seryl-[protein] + ATP = O-phospho-L-seryl-[protein] + ADP + H(+). The enzyme catalyses L-threonyl-[protein] + ATP = O-phospho-L-threonyl-[protein] + ADP + H(+). This chain is Serine/threonine-protein kinase dst3, found in Dictyostelium discoideum (Social amoeba).